The chain runs to 1787 residues: Chitin synthase 5 (1787 aa).

A disordered region spans residues 1–26 (MASRRMSMYSVTSEGMGGPRGAGQQS). Asn164 is a glycosylation site (N-linked (GlcNAc...) asparagine). The tract at residues 345 to 367 (RIRDGDESSDGGRGARTPNSAED) is disordered. 4 N-linked (GlcNAc...) asparagine glycosylation sites follow: Asn643, Asn657, Asn668, and Asn695. 2 helical membrane-spanning segments follow: residues 747–767 (MWVA…LRYV) and 783–803 (FVLC…IIFL). N-linked (GlcNAc...) asparagine glycans are attached at residues Asn894 and Asn1018. Residues 1055–1075 (FLLAFAIIMCAVILLKFVSAL) form a helical membrane-spanning segment. N-linked (GlcNAc...) asparagine glycosylation is present at Asn1420. Helical transmembrane passes span 1445-1465 (FVVF…VYLG), 1478-1498 (FPLI…LIFI), and 1506-1526 (IGWM…LPIY). The N-linked (GlcNAc...) asparagine glycan is linked to Asn1533. Positions 1628 to 1657 (SPNSPAPYQHMSRSPTAYAGPTPYSDNPAA) are disordered. In terms of domain architecture, DEK-C spans 1729–1785 (GPDDFQIVDAIRAVLMEVDLDTVTKKQVRALVEQRLQTELVGERRTFLDRQIDNELA).

Belongs to the chitin synthase family. Class V subfamily.

It localises to the cell membrane. It carries out the reaction [(1-&gt;4)-N-acetyl-beta-D-glucosaminyl](n) + UDP-N-acetyl-alpha-D-glucosamine = [(1-&gt;4)-N-acetyl-beta-D-glucosaminyl](n+1) + UDP + H(+). Its function is as follows. Polymerizes chitin, a structural polymer of the cell wall and septum, by transferring the sugar moiety of UDP-GlcNAc to the non-reducing end of the growing chitin polymer. May play a minor overlapping role with CHS6 in growth and differentiation. This chain is Chitin synthase 5, found in Pyricularia oryzae (strain 70-15 / ATCC MYA-4617 / FGSC 8958) (Rice blast fungus).